Consider the following 300-residue polypeptide: Type II methyltransferase M.XycI (300 aa).

A disordered region spans residues 109 to 129; sequence RGYRAPDKKNPARAMDVRPDT. The span at 112 to 127 shows a compositional bias: basic and acidic residues; the sequence is RAPDKKNPARAMDVRP.

The protein belongs to the N(4)/N(6)-methyltransferase family. N(4) subfamily.

The catalysed reaction is a 2'-deoxycytidine in DNA + S-adenosyl-L-methionine = an N(4)-methyl-2'-deoxycytidine in DNA + S-adenosyl-L-homocysteine + H(+). In terms of biological role, a beta subtype methylase, recognizes the double-stranded sequence 5'-CCCGGG-3', methylates C-2 on both strands, and protects the DNA from cleavage by the XcyI endonuclease. The protein is Type II methyltransferase M.XycI (xcyIM) of Xanthomonas campestris pv. cyanopsidis.